The chain runs to 320 residues: MAIVNVNRFLKEVESTDLKIDAISSSELYKDATFFKPDVLNCIKRFESNVKVSSRSGDGLVLSDFKLLDDTEIDSIRKKSNKYKYLHYGVILVGIKAMLPNFRGMEGRVIVYDGACLDPKRGHICSYLFKFESDCCYFGLRPEHCLSTTDANLAKRFRFRVDFDCPQYEQDTELFALDIGVAYRCVNSARFLETKTGDSGWASQAISGCEALKFNEEIKMAILDRRSPLFLEEGAPNVHIEKRLFRGDKVRRSRSISAKRGPNSRVQEKRGFRSLSARIERFGKNEFGRRASASEAPPGRSISMEDSHRPGKGTSDGSSP.

Residues His-144, Asp-171, and Ser-199 contribute to the active site. 2 disordered regions span residues 251–270 (RRSR…QEKR) and 286–320 (EFGR…GSSP).

Belongs to the tobamoviruses movement protein family.

In terms of biological role, may play a role in virus cell to cell movement by increasing the size exclusion limit of plasmodesmata and forming a complex with viral RNA to assist its movement. May also have a papain-like protease activity and cleave the genome polyprotein. The protein is Probable movement protein of Malus sylvestris (European crab apple).